The chain runs to 198 residues: UPF0301 protein BDI_1431 (198 aa).

It belongs to the UPF0301 (AlgH) family.

The polypeptide is UPF0301 protein BDI_1431 (Parabacteroides distasonis (strain ATCC 8503 / DSM 20701 / CIP 104284 / JCM 5825 / NCTC 11152)).